The following is a 255-amino-acid chain: Protein DAL82 (255 aa).

A disordered region spans residues 87–149 (PEHPRPRTKF…SQPLPLDSIT (63 aa)). The span at 128–138 (PNNHSSDDEHS) shows a compositional bias: basic and acidic residues.

In terms of biological role, positive regulator of allophanate-induced genes in S.cerevisiae. The protein is Protein DAL82 (DAL82) of Saccharomyces cerevisiae (strain ATCC 204508 / S288c) (Baker's yeast).